The following is a 470-amino-acid chain: Cytochrome P450 monooxygenase sirC (470 aa).

The chain crosses the membrane as a helical span at residues 12–34 (LRGMVVGTIMLLCYRYGLALSIL). Asn-399 carries an N-linked (GlcNAc...) asparagine glycan. A heme-binding site is contributed by Cys-410.

The protein belongs to the cytochrome P450 family. Requires heme as cofactor.

Its subcellular location is the membrane. The protein operates within mycotoxin biosynthesis. Its function is as follows. Cytochrome P450 monooxygenase; part of the gene cluster that mediates the biosynthesis of sirodesmin PL, an epipolythiodioxopiperazine (ETP) characterized by a disulfide bridged cyclic dipeptide and that acts as a phytotoxin which is involved in the blackleg didease of canola. SirD catalyzes the O-prenylation of L-tyrosine (L-Tyr) in the presence of dimethylallyl diphosphate (DMAPP) to yield 4-O-dimethylallyl-L-Tyr, and therefore represents probably the first pathway-specific enzyme in the biosynthesis of sirodesmin PL. 4-O-dimethylallyl-L-Tyr, then undergoes condensation with L-Ser in a reaction catalyzed by the non-ribosomal peptide synthase sirP to form the diketopiperazine (DKP) backbone. Further bishydroxylation of the DKP performed by the cytochrome P450 monooxygenase sirC leads to the production of the intermediate phomamide. This step is essential to form the reactive thiol group required for toxicity of sirodesmin PL. The next steps of sirodesmin biosynthesis are not well understood yet, but some predictions could be made from intermediate compounds identification. Phomamide is converted into phomalizarine via oxidation, probably by sirT. Further oxidation, methylation (by sirM or sirN) and reduction steps convert phomalizarine to deacetyl sirodesmin. Finally, acetyltransferase sirH probably acetylates deacetyl sirodesmin to produce sirodesmin PL. This chain is Cytochrome P450 monooxygenase sirC, found in Leptosphaeria maculans (Blackleg fungus).